Reading from the N-terminus, the 318-residue chain is MLQTRKVGIVGIGHVGSHCALSMLLQGVCDEMVLMDIIPEKAKAHAIDCMDTISFLPHRAIIRDGGIQELSKMDVIVISVGSLTKNEQRLEELKGSLEAIKSFVPDVVKAGFNGIFVTITNPVDIVTYFVRELSGFPKNRVIGTGTGLDSARLKRILSEVTNIDSQVIQAYMLGEHGDTQIANFSSATIQGVPFLDYMKTHPEQFKGVELSVLEKQVVRTAWDIISGKNCTEFGIGCTCSNLVKAIFHNERRVLPCSAYLNGEYGHSGFYTGVPAIIGSNGVEEILELPLDERERKGFEDACAVMKKYIEVGKSYKIV.

Residues Val-15, Asp-36, and Lys-41 each coordinate NAD(+). Position 89 (Arg-89) interacts with substrate. Residues Ser-102, 119–121 (ITN), and Thr-144 each bind NAD(+). 121–124 (NPVD) serves as a coordination point for substrate. Position 149–152 (149–152 (DSAR)) interacts with substrate. His-176 serves as the catalytic Proton acceptor. Thr-231 provides a ligand contact to substrate.

This sequence belongs to the LDH/MDH superfamily. LDH family. In terms of assembly, homotetramer.

The protein localises to the cytoplasm. The catalysed reaction is (S)-lactate + NAD(+) = pyruvate + NADH + H(+). It participates in fermentation; pyruvate fermentation to lactate; (S)-lactate from pyruvate: step 1/1. Catalyzes the conversion of lactate to pyruvate. The polypeptide is L-lactate dehydrogenase (Fusobacterium nucleatum subsp. nucleatum (strain ATCC 25586 / DSM 15643 / BCRC 10681 / CIP 101130 / JCM 8532 / KCTC 2640 / LMG 13131 / VPI 4355)).